The sequence spans 356 residues: Dihydroorotate dehydrogenase (quinone) (356 aa).

FMN is bound by residues 67–71 (PGFDK) and threonine 91. Lysine 71 is a binding site for substrate. 116–120 (NRMGF) contacts substrate. The FMN site is built by asparagine 147 and asparagine 178. Residue asparagine 178 participates in substrate binding. Residue serine 181 is the Nucleophile of the active site. Asparagine 183 contacts substrate. FMN contacts are provided by lysine 218 and serine 246. Substrate is bound at residue 247-248 (NT). Residues glycine 268, glycine 297, and 318–319 (YS) contribute to the FMN site.

Belongs to the dihydroorotate dehydrogenase family. Type 2 subfamily. Monomer. Requires FMN as cofactor.

Its subcellular location is the cell membrane. The enzyme catalyses (S)-dihydroorotate + a quinone = orotate + a quinol. Its pathway is pyrimidine metabolism; UMP biosynthesis via de novo pathway; orotate from (S)-dihydroorotate (quinone route): step 1/1. Its function is as follows. Catalyzes the conversion of dihydroorotate to orotate with quinone as electron acceptor. This Sphingopyxis alaskensis (strain DSM 13593 / LMG 18877 / RB2256) (Sphingomonas alaskensis) protein is Dihydroorotate dehydrogenase (quinone).